A 324-amino-acid polypeptide reads, in one-letter code: Dehydrogenase/reductase SDR family member 7C-A (324 aa).

The N-terminal stretch at 1 to 17 (MAVPSVMVLPLLIVVFA) is a signal peptide. Residue 41–65 (VITDAVSGMGSECARLFHAGGARLV) coordinates NAD(+). Substrate is bound at residue Ser-178. Tyr-191 acts as the Proton acceptor in catalysis.

Belongs to the short-chain dehydrogenases/reductases (SDR) family.

Its subcellular location is the secreted. Its function is as follows. Putative oxidoreductase. This Danio rerio (Zebrafish) protein is Dehydrogenase/reductase SDR family member 7C-A (dhrs7ca).